Here is a 200-residue protein sequence, read N- to C-terminus: Putative 3-methyladenine DNA glycosylase (200 aa).

The protein belongs to the DNA glycosylase MPG family.

This is Putative 3-methyladenine DNA glycosylase from Methanocella arvoryzae (strain DSM 22066 / NBRC 105507 / MRE50).